We begin with the raw amino-acid sequence, 1387 residues long: DNA-directed RNA polymerase subunit beta (1387 aa).

The protein belongs to the RNA polymerase beta chain family. The RNAP catalytic core consists of 2 alpha, 1 beta, 1 beta' and 1 omega subunit. When a sigma factor is associated with the core the holoenzyme is formed, which can initiate transcription.

The enzyme catalyses RNA(n) + a ribonucleoside 5'-triphosphate = RNA(n+1) + diphosphate. In terms of biological role, DNA-dependent RNA polymerase catalyzes the transcription of DNA into RNA using the four ribonucleoside triphosphates as substrates. The sequence is that of DNA-directed RNA polymerase subunit beta from Xanthomonas campestris pv. campestris (strain ATCC 33913 / DSM 3586 / NCPPB 528 / LMG 568 / P 25).